A 294-amino-acid chain; its full sequence is Protein farnesyltransferase/geranylgeranyltransferase type-1 subunit alpha (294 aa).

PFTA repeat units follow at residues 57 to 91 (YSLR…HTPS), 92 to 125 (YIDN…SLTK), 126 to 160 (NYER…NFND), 161 to 194 (YSQE…ETSK), and 199 to 233 (SLEE…KSGP).

The protein belongs to the protein prenyltransferase subunit alpha family. In terms of assembly, heterodimer of an alpha(cwp1) and a beta(cpp1 or cwg2) subunit. It depends on Mg(2+) as a cofactor.

The catalysed reaction is L-cysteinyl-[protein] + (2E,6E)-farnesyl diphosphate = S-(2E,6E)-farnesyl-L-cysteinyl-[protein] + diphosphate. It carries out the reaction geranylgeranyl diphosphate + L-cysteinyl-[protein] = S-geranylgeranyl-L-cysteinyl-[protein] + diphosphate. Functionally, catalyzes the transfer of a farnesyl or geranyl-geranyl moiety from farnesyl or geranyl-geranyl diphosphate to a cysteine at the fourth position from the C-terminus of several proteins having the C-terminal sequence Cys-aliphatic-aliphatic-X. The alpha(cwp1) subunit is thought to participate in a stable complex with the substrate. The beta(cpp1 or cwg2) subunits bind the peptide substrate. The sequence is that of Protein farnesyltransferase/geranylgeranyltransferase type-1 subunit alpha (cwp1) from Schizosaccharomyces pombe (strain 972 / ATCC 24843) (Fission yeast).